We begin with the raw amino-acid sequence, 352 residues long: N-terminal EF-hand calcium-binding protein 1 (352 aa).

Position 4 is a phosphoserine (serine 4). EF-hand domains are found at residues 26-61 (KGMSIFLDILRRADKNDDGKLSFEEFKAYFADGVLS) and 60-95 (LSGEELHELFHTIDTHNTNNLDTEELCEYFSQHLGE). Ca(2+) contacts are provided by aspartate 39, asparagine 41, aspartate 43, lysine 45, and glutamate 50. The stretch at 135-163 (LLKETLNQLQSLQNSLECAMETTEEQTRQ) forms a coiled coil. Positions 155-202 (ETTEEQTRQERQGPSKPEVLSIQWPGKRSSRRVQRHNSFSPNSPQFNV) are disordered. Positions 190–202 (HNSFSPNSPQFNV) are enriched in polar residues. 2 positions are modified to phosphoserine: serine 192 and serine 197. Residues 209–275 (EEDNQWMTQI…EEFQLALKHY (67 aa)) are a coiled coil. One can recognise an ABM domain in the interval 252–340 (MLVQRQMSVT…LETPELTSTM (89 aa)).

Interacts with STX1. May interact with CPNE6.

Its subcellular location is the cytoplasm. The sequence is that of N-terminal EF-hand calcium-binding protein 1 (Necab1) from Rattus norvegicus (Rat).